The chain runs to 499 residues: Cytochrome P450 2M1 (499 aa).

Heme is bound at residue cysteine 441.

Belongs to the cytochrome P450 family. Heme serves as cofactor. In kidney and in liver from juvenile and sexually mature trout from both sexes.

The protein localises to the endoplasmic reticulum membrane. The protein resides in the microsome membrane. It catalyses the reaction an organic molecule + reduced [NADPH--hemoprotein reductase] + O2 = an alcohol + oxidized [NADPH--hemoprotein reductase] + H2O + H(+). Has (omega-6)-hydroxylation activity toward lauric acid. This Oncorhynchus mykiss (Rainbow trout) protein is Cytochrome P450 2M1 (cyp2m1).